The following is a 407-amino-acid chain: Aminomethyltransferase, mitochondrial (407 aa).

Residues 1–29 (MRGGLWQLGQSITRRLGQSDKKTIVRRCY) constitute a mitochondrion transit peptide. The substrate site is built by Glu234, Arg265, and Tyr403.

It belongs to the GcvT family. As to quaternary structure, the glycine cleavage system is composed of four proteins: P, T, L and H.

The protein localises to the mitochondrion. The catalysed reaction is N(6)-[(R)-S(8)-aminomethyldihydrolipoyl]-L-lysyl-[protein] + (6S)-5,6,7,8-tetrahydrofolate = N(6)-[(R)-dihydrolipoyl]-L-lysyl-[protein] + (6R)-5,10-methylene-5,6,7,8-tetrahydrofolate + NH4(+). Its function is as follows. The glycine cleavage system catalyzes the degradation of glycine. The chain is Aminomethyltransferase, mitochondrial (GDCST) from Flaveria anomala (Yellowtops).